A 354-amino-acid chain; its full sequence is Myosin-binding protein H-like (354 aa).

The disordered stretch occupies residues 1–47; that stretch reads MEAATAPEVAAGSKLKVKEASPADAEPPQASPGQGAGSPTPQLLPPI. The residue at position 38 (S38) is a Phosphoserine. The Ig-like C2-type 1 domain occupies 45-139; the sequence is PPIEEHPKIW…GGLEATATID (95 aa). The Fibronectin type-III domain maps to 148 to 238; it reads PPQSIKLVDV…ETAPITTDLA (91 aa). Residues 261 to 345 form the Ig-like C2-type 2 domain; it reads PKFTQPLADC…VNPLGEASVD (85 aa). The cysteines at positions 282 and 333 are disulfide-linked. R321 is subject to Omega-N-methylarginine.

It belongs to the immunoglobulin superfamily. MyBP family. Expressed in heart, with higher expression in the atria. In terms of tissue distribution, expressed in left atrium and ventricle, arteria mammaria interna and skeletal muscle. As to expression, expressed specifically en the left atrium.

It localises to the cytoplasm. It is found in the myofibril. The protein localises to the sarcomere. Functionally, myosin-binding protein which plays a role in cardiac function. Seems to regulate conduction in the atria and ventricular conduction systems. This is Myosin-binding protein H-like from Homo sapiens (Human).